We begin with the raw amino-acid sequence, 155 residues long: Nascent polypeptide-associated complex subunit beta (155 aa).

Disordered stretches follow at residues 1–39 and 122–155; these read MDQA…DDKK and QNMQ…SKVE. Basic residues predominate over residues 21–31; the sequence is TPRRKTKKVHK. The region spanning 34–99 is the NAC-A/B domain; sequence GTDDKKLQTS…GEEKELTELV (66 aa). Positions 125 to 135 are enriched in basic and acidic residues; it reads QKKEGEAKKEG.

Belongs to the NAC-beta family. As to quaternary structure, part of the nascent polypeptide-associated complex (NAC), consisting of EGD2 and EGD1. NAC associates with ribosomes via EGD1.

Its subcellular location is the cytoplasm. The protein resides in the nucleus. In terms of biological role, component of the nascent polypeptide-associated complex (NAC), a dynamic component of the ribosomal exit tunnel, protecting the emerging polypeptides from interaction with other cytoplasmic proteins to ensure appropriate nascent protein targeting. The NAC complex also promotes mitochondrial protein import by enhancing productive ribosome interactions with the outer mitochondrial membrane and blocks the inappropriate interaction of ribosomes translating non-secretory nascent polypeptides with translocation sites in the membrane of the endoplasmic reticulum. EGD1 may act as a transcription factor that exert a negative effect on the expression of several genes that are transcribed by RNA polymerase II. The protein is Nascent polypeptide-associated complex subunit beta (EGD1) of Coccidioides immitis (strain RS) (Valley fever fungus).